The following is a 61-amino-acid chain: Large ribosomal subunit protein eL37 (61 aa).

Zn(2+) is bound by residues Cys19, Cys22, Cys34, and Cys37. A C4-type zinc finger spans residues 19–37 (CRRCGRNAYNVSKHYCAAC).

Belongs to the eukaryotic ribosomal protein eL37 family. The cofactor is Zn(2+).

In terms of biological role, binds to the 23S rRNA. In Saccharolobus solfataricus (strain ATCC 35092 / DSM 1617 / JCM 11322 / P2) (Sulfolobus solfataricus), this protein is Large ribosomal subunit protein eL37 (rpl37e).